The primary structure comprises 545 residues: Pentatricopeptide repeat-containing protein At4g18840 (545 aa).

PPR repeat units lie at residues 104 to 138, 139 to 173, 174 to 204, 205 to 239, 240 to 266, 267 to 301, 303 to 337, 338 to 368, 369 to 403, 404 to 434, and 440 to 474; these read NGFT…PVFP, DKYS…GLVT, DVFV…MPVR, DAVS…NVES, WNFM…MPVR, DVVS…STEK, DGFT…GIEI, EGFL…TSKR, DVST…GFKP, NGIT…MSSV, and TIEH…EASI. Positions 475-545 are type E motif; the sequence is LLESLLGACK…ERVNRSLDVA (71 aa).

Belongs to the PPR family. PCMP-E subfamily.

The sequence is that of Pentatricopeptide repeat-containing protein At4g18840 (PCMP-E101) from Arabidopsis thaliana (Mouse-ear cress).